Reading from the N-terminus, the 279-residue chain is Tryptophan synthase alpha chain (279 aa).

Active-site proton acceptor residues include E50 and D61.

This sequence belongs to the TrpA family. Tetramer of two alpha and two beta chains.

The enzyme catalyses (1S,2R)-1-C-(indol-3-yl)glycerol 3-phosphate + L-serine = D-glyceraldehyde 3-phosphate + L-tryptophan + H2O. It participates in amino-acid biosynthesis; L-tryptophan biosynthesis; L-tryptophan from chorismate: step 5/5. Functionally, the alpha subunit is responsible for the aldol cleavage of indoleglycerol phosphate to indole and glyceraldehyde 3-phosphate. The protein is Tryptophan synthase alpha chain of Brucella abortus (strain S19).